Consider the following 189-residue polypeptide: Peptide deformylase (189 aa).

Residues Cys-93 and His-135 each coordinate Fe cation. Residue Glu-136 is part of the active site. His-139 contacts Fe cation.

Belongs to the polypeptide deformylase family. The cofactor is Fe(2+).

It carries out the reaction N-terminal N-formyl-L-methionyl-[peptide] + H2O = N-terminal L-methionyl-[peptide] + formate. In terms of biological role, removes the formyl group from the N-terminal Met of newly synthesized proteins. Requires at least a dipeptide for an efficient rate of reaction. N-terminal L-methionine is a prerequisite for activity but the enzyme has broad specificity at other positions. This is Peptide deformylase from Karelsulcia muelleri (strain GWSS) (Sulcia muelleri).